A 206-amino-acid chain; its full sequence is MKQILDFIPLIIFFALYKMYDIYTATGALIVASAVQIILTYFIYKKVEKMQVITFLMVAVFGGMTIFLHDDNFIKWKVTIVYALFAIGLTVSHIMGKSAIKGMLGKEITLPDSIWGKINWAWTLFFTLCAILNVYVAFNLPLDVWVNFKVFGLLIATFAFTLLTGVYIYKHLPKDQHLPKDKHQQRDQETQNDTQQELSGKNTEEK.

5 helical membrane passes run 22 to 42 (IYTA…LTYF), 50 to 70 (MQVI…FLHD), 76 to 96 (WKVT…HIMG), 118 to 138 (INWA…YVAF), and 148 to 168 (FKVF…GVYI). Basic and acidic residues predominate over residues 178–189 (LPKDKHQQRDQE). Residues 178–206 (LPKDKHQQRDQETQNDTQQELSGKNTEEK) are disordered. The segment covering 191-206 (QNDTQQELSGKNTEEK) has biased composition (polar residues).

This sequence belongs to the YciB family.

It is found in the cell inner membrane. In terms of biological role, plays a role in cell envelope biogenesis, maintenance of cell envelope integrity and membrane homeostasis. This is Inner membrane-spanning protein YciB from Vibrio atlanticus (strain LGP32) (Vibrio splendidus (strain Mel32)).